The sequence spans 1581 residues: MAVSRVLSLLATVASMALVIQETHFAAGADMGSCYDGVGRAQRCLPEFENAAFGRRAEASHTCGRPPEDFCPHVGAPGAGLQCQRCDDADPGRRHDASYLTDFHSPDDSTWWQSPSMAFGVQYPTSVNLTLSLGKAYEITYVRLKFHTSRPESFAIYKRTYASGPWEPYQYYSASCQKTYGRPEGHYLRPGEDERVAFCTSEFSDISPLNGGNVAFSTLEGRPSAYNFEESPVLQEWVTSTDILISLDRLNTFGDDIFKDPRVLQSYYYAVSDFSVGGRCKCNGHASECEPNAAGQLACRCQHNTTGVDCERCLPFFQDRPWARGTAEDANECLPCNCSGHSEECTFDRELYRSTGHGGHCQRCRDHTTGPHCERCEKNYYRWSPKTPCQPCDCHPAGSLSLQCDNSGVCPCKPTVTGWKCDRCLPGFHSLSEGGCRPCACNVAGSLGTCDPRSGNCPCKENVEGSLCDRCRPGTFNLQPHNPVGCSSCFCYGHSKVCSPAAGFQEHHIRSDFRHGAGGWQIRSMGVSKRPLQWSQSGLLLGLRGGEELSAPKKFLGDQRLSYGQPVILTLQVPPGGSPPPIQLRLEGAGLALSLRPSSLPSPQDTRQPRRVQLQFLLQETSEEAESPLPTFHFQRLLSNLTALSIWTSGQGPGHSGQVLLCEVQLTSAWPQRELAPPASWVETCLCPQGYTGQFCEFCALGYKREIPHGGPYANCIPCTCNQHGTCDPNTGICLCGHHTEGPSCERCMPGFYGNAFSGRADDCQPCPCPGQSACATIPESGDVVCTHCPPGQRGRRCESCEDGFFGDPLGLSGAPQPCRRCQCSGNVDLNAVGNCDPHSGHCLRCLYNTTGAHCEHCREGFYGSAVATRPVDKCAPCSCDLRGSVSEKTCNPVTGQCVCLPYVSGRDCSRCSPGFYDLQSGRGCQSCKCHPLGSLENKCHPKTGQCPCRPGVTGQACDRCQLGFFGFSIKGCRDCRCSPLGAASSQCHENSTCVCRPGFVGYKCDRCQDNFFLADGDTGCQECPTCYALVKEEAAKLKARLMLMEGWLQRSDCGSPWGPLDILQGEAPLGDVYQGHHLLQETRGTFLQQMVGLEDSVKATWEQLQVLRGHVHCAQAGAQKTCIQLAELEETLQSSEEEVLRAASALSFLASLQKGSSTPTNWSHLASEAQILARSHRDTATKIEATSERALLASNASYELLKLMEGRVASEAQQELEDRYQEVQAAQTALGIAVAEALPKAEKALATVKQVIGDAAPHLGLLVTPEAMNFQARGLSWKVKALEQKLEQKEPEVGQSVGALQVEAGRALEKMEPFMQLRNKTTAAFTRASSAVQAAKVTVIGAETLLADLEGMKLRSPLPKEQAALKKKAGSIRTRLLEDTKRKTKQAERMLGNAASLSSSTKKKSKEAELMSKDNAKLSRALLREGKQGYRHASRLASQTQATLRRASRLLLTSEAHKQELEEAKQVTSGLSTVERQIRESRISLEKDTKVLSELLVKLGSLGVHQAPAQTLNETQRALESLRLQLDSHGALHHKLRQLEEESARQELQIQSFEDDLAEIRADKHNLETILSSLPENCAS.

Positions 1–28 (MAVSRVLSLLATVASMALVIQETHFAAG) are cleaved as a signal peptide. Positions 40 to 279 (RAQRCLPEFE…AVSDFSVGGR (240 aa)) constitute a Laminin N-terminal domain. A glycan (N-linked (GlcNAc...) asparagine) is linked at Asn-128. Disulfide bonds link Cys-280-Cys-289, Cys-282-Cys-299, Cys-301-Cys-310, Cys-313-Cys-333, Cys-336-Cys-345, Cys-338-Cys-361, Cys-364-Cys-373, Cys-376-Cys-389, Cys-392-Cys-404, Cys-394-Cys-410, Cys-412-Cys-421, Cys-424-Cys-436, Cys-439-Cys-450, Cys-441-Cys-457, Cys-459-Cys-468, and Cys-471-Cys-486. 4 consecutive Laminin EGF-like domains span residues 280–335 (CKCN…ECLP), 336–391 (CNCS…PCQP), 392–438 (CDCH…GCRP), and 439–488 (CACN…GCSS). Asn-304 is a glycosylation site (N-linked (GlcNAc...) asparagine). N-linked (GlcNAc...) asparagine glycosylation is present at Asn-337. A Laminin EGF-like 5; first part domain is found at 489-498 (CFCYGHSKVC). One can recognise a Laminin IV type A domain in the interval 508-684 (HIRSDFRHGA…LAPPASWVET (177 aa)). Asn-640 is a glycosylation site (N-linked (GlcNAc...) asparagine). Residues 685 to 718 (CLCPQGYTGQFCEFCALGYKREIPHGGPYANCIP) form the Laminin EGF-like 5; second part domain. 24 cysteine pairs are disulfide-bonded: Cys-719-Cys-727, Cys-721-Cys-734, Cys-736-Cys-745, Cys-748-Cys-764, Cys-767-Cys-775, Cys-769-Cys-786, Cys-789-Cys-798, Cys-801-Cys-819, Cys-822-Cys-836, Cys-824-Cys-843, Cys-846-Cys-855, Cys-858-Cys-875, Cys-878-Cys-891, Cys-880-Cys-898, Cys-900-Cys-909, Cys-912-Cys-925, Cys-928-Cys-940, Cys-930-Cys-947, Cys-949-Cys-958, Cys-961-Cys-973, Cys-976-Cys-988, Cys-978-Cys-994, Cys-996-Cys-1005, and Cys-1008-Cys-1021. Laminin EGF-like domains follow at residues 719–766 (CTCN…DCQP), 767–821 (CPCP…PCRR), 822–877 (CQCS…KCAP), 878–927 (CSCD…GCQS), 928–975 (CKCH…GCRD), and 976–1024 (CRCS…CQEC). Residue Asn-849 is glycosylated (N-linked (GlcNAc...) asparagine). Residue Asn-991 is glycosylated (N-linked (GlcNAc...) asparagine). Residues 1025 to 1581 (PTCYALVKEE…LSSLPENCAS (557 aa)) form a domain II and I region. Coiled coils occupy residues 1029–1046 (ALVK…MLME) and 1112–1153 (VHCA…LASL). Residues Asn-1162 and Asn-1196 are each glycosylated (N-linked (GlcNAc...) asparagine). Residues 1208 to 1231 (RVASEAQQELEDRYQEVQAAQTAL) adopt a coiled-coil conformation. Asn-1320 is a glycosylation site (N-linked (GlcNAc...) asparagine). Positions 1382-1413 (KRKTKQAERMLGNAASLSSSTKKKSKEAELMS) are disordered. Coiled coils occupy residues 1438 to 1468 (ASQT…AKQV) and 1510 to 1575 (AQTL…LSSL). Asn-1514 is a glycosylation site (N-linked (GlcNAc...) asparagine).

In terms of assembly, laminin is a complex glycoprotein, consisting of three different polypeptide chains (alpha, beta, gamma), which are bound to each other by disulfide bonds into a cross-shaped molecule comprising one long and three short arms with globules at each end. Gamma-3 is a subunit of laminin-12 (laminin-213), laminin-14 (laminin-423) and laminin-15 (laminin-523). As to expression, strongly expressed in capillaries and arterioles of kidney as well as in interstitial Leydig cells of testis.

The protein resides in the secreted. Its subcellular location is the extracellular space. It localises to the extracellular matrix. The protein localises to the basement membrane. Its function is as follows. Binding to cells via a high affinity receptor, laminin is thought to mediate the attachment, migration and organization of cells into tissues during embryonic development by interacting with other extracellular matrix components. The polypeptide is Laminin subunit gamma-3 (Lamc3) (Mus musculus (Mouse)).